Consider the following 445-residue polypeptide: Asparagine--tRNA ligase (445 aa).

This sequence belongs to the class-II aminoacyl-tRNA synthetase family. Homodimer.

It is found in the cytoplasm. It catalyses the reaction tRNA(Asn) + L-asparagine + ATP = L-asparaginyl-tRNA(Asn) + AMP + diphosphate + H(+). The sequence is that of Asparagine--tRNA ligase from Deinococcus deserti (strain DSM 17065 / CIP 109153 / LMG 22923 / VCD115).